The sequence spans 51 residues: Large ribosomal subunit protein eL39 (51 aa).

The protein belongs to the eukaryotic ribosomal protein eL39 family.

The polypeptide is Large ribosomal subunit protein eL39 (rpl39e) (Methanothermobacter thermautotrophicus (strain ATCC 29096 / DSM 1053 / JCM 10044 / NBRC 100330 / Delta H) (Methanobacterium thermoautotrophicum)).